A 475-amino-acid polypeptide reads, in one-letter code: Ribulose bisphosphate carboxylase large chain (475 aa).

Positions 1-2 (MS) are excised as a propeptide. An N-acetylproline modification is found at Pro-3. Lys-14 bears the N6,N6,N6-trimethyllysine mark. Residues Asn-123 and Thr-173 each contribute to the substrate site. Catalysis depends on Lys-175, which acts as the Proton acceptor. Lys-177 provides a ligand contact to substrate. Lys-201, Asp-203, and Glu-204 together coordinate Mg(2+). Lys-201 bears the N6-carboxylysine mark. His-294 (proton acceptor) is an active-site residue. 3 residues coordinate substrate: Arg-295, His-327, and Ser-379.

This sequence belongs to the RuBisCO large chain family. Type I subfamily. As to quaternary structure, heterohexadecamer of 8 large chains and 8 small chains; disulfide-linked. The disulfide link is formed within the large subunit homodimers. Mg(2+) is required as a cofactor. The disulfide bond which can form in the large chain dimeric partners within the hexadecamer appears to be associated with oxidative stress and protein turnover.

The protein resides in the plastid. It localises to the chloroplast. The enzyme catalyses 2 (2R)-3-phosphoglycerate + 2 H(+) = D-ribulose 1,5-bisphosphate + CO2 + H2O. The catalysed reaction is D-ribulose 1,5-bisphosphate + O2 = 2-phosphoglycolate + (2R)-3-phosphoglycerate + 2 H(+). In terms of biological role, ruBisCO catalyzes two reactions: the carboxylation of D-ribulose 1,5-bisphosphate, the primary event in carbon dioxide fixation, as well as the oxidative fragmentation of the pentose substrate in the photorespiration process. Both reactions occur simultaneously and in competition at the same active site. The chain is Ribulose bisphosphate carboxylase large chain from Carpinus caroliniana (American hornbeam).